Reading from the N-terminus, the 422-residue chain is Tyrosine--tRNA ligase 1 (422 aa).

An L-tyrosine-binding site is contributed by Tyr36. The 'HIGH' region motif lies at 41–50; that stretch reads PTAGSLHIGH. Residues Tyr173 and Gln177 each contribute to the L-tyrosine site. Positions 233–237 match the 'KMSKS' region motif; that stretch reads KFGKT. Lys236 provides a ligand contact to ATP. The 65-residue stretch at 355 to 419 folds into the S4 RNA-binding domain; sequence SDVVTLLLET…GKKQFAMVKL (65 aa).

It belongs to the class-I aminoacyl-tRNA synthetase family. TyrS type 1 subfamily. Homodimer.

The protein resides in the cytoplasm. It carries out the reaction tRNA(Tyr) + L-tyrosine + ATP = L-tyrosyl-tRNA(Tyr) + AMP + diphosphate + H(+). Functionally, catalyzes the attachment of tyrosine to tRNA(Tyr) in a two-step reaction: tyrosine is first activated by ATP to form Tyr-AMP and then transferred to the acceptor end of tRNA(Tyr). This Vibrio vulnificus (strain YJ016) protein is Tyrosine--tRNA ligase 1.